The chain runs to 206 residues: Sortase A (206 aa).

The Cytoplasmic segment spans residues 1–6 (MKKWTN). A helical transmembrane segment spans residues 7-24 (RLMTIAGVVLILVAAYLF). Residues 25 to 206 (AKPHIDNYLH…RKIFVATEVK (182 aa)) are Extracellular-facing. Positions 49–69 (VKEQASKDKKQQAKPQIPKDK) are disordered. Ca(2+) is bound by residues E105, E108, D112, and N114. H120 serves as the catalytic Proton donor/acceptor. Position 171 (E171) interacts with Ca(2+). C184 (acyl-thioester intermediate) is an active-site residue.

Belongs to the bacterial sortase family. Class A subfamily. In terms of assembly, monomer and homodimer; in equilibrium.

It localises to the cell membrane. The enzyme catalyses The enzyme catalyzes a cell wall sorting reaction in which a surface protein with a sorting signal containing a LPXTG motif is cleaved between the Thr and Gly residue. The resulting threonine carboxyl end of the protein is covalently attached to a pentaglycine cross-bridge of peptidoglycan.. Its activity is regulated as follows. Sortase activity is regulated by monomer-homodimer equilibrium. Mutant cells with monomeric SrtA display more adhesive proteins on the cell surface and are more invasive than wild-type cells, which have majority of SrtA in dimeric form. Dimerization may suppress the enzymatic activity on cell membranes. Stimulated by calcium ions, which promote substrate binding. Calcium ions bind to SrtA and modulate both the structure and dynamics of a large active site loop. Can also be stimulated, to a lesser extent, by Mg(2+) and Mn(2+). Inhibited by sulfhydryl-modifying reagents. Functionally, transpeptidase that anchors surface proteins to the cell wall. Recognizes and modifies its substrate by proteolytic cleavage of a C-terminal sorting signal. Following cleavage, a covalent intermediate is formed via a thioester bond between the sortase and its substrate, which is then transferred and covalently attached to the cell wall. This sortase recognizes a Leu-Pro-x-Thr-Gly (LPXTG) motif, which is cleaved by the sortase between the threonine and glycine residues. Utilizes lipid II as the peptidoglycan substrate for the sorting reaction. Responsible for the display of important virulence factors. Important for interactions with the host and host colonization during infection. This chain is Sortase A, found in Staphylococcus aureus (strain NCTC 8325 / PS 47).